A 321-amino-acid chain; its full sequence is uncharacterized protein (321 aa).

The interval 280 to 306 is disordered; it reads NSDHINNENNTNSNNDDNSNNSNNNNE. Residues 286–306 are compositionally biased toward low complexity; it reads NENNTNSNNDDNSNNSNNNNE.

This is an uncharacterized protein from Dictyostelium discoideum (Social amoeba).